We begin with the raw amino-acid sequence, 421 residues long: Signal recognition particle receptor FtsY (421 aa).

Positions 1–10 (MFSFFRRKKK) are enriched in basic residues. The tract at residues 1–31 (MFSFFRRKKKQETPALEEAQIQETAAKAESE) is disordered. Residues 228-235 (GINGAGKT), 309-313 (DTAGR), and 373-376 (TKLD) each bind GTP.

This sequence belongs to the GTP-binding SRP family. FtsY subfamily. Part of the signal recognition particle protein translocation system, which is composed of SRP and FtsY. SRP is a ribonucleoprotein composed of Ffh and a 4.5S RNA molecule.

The protein resides in the cell inner membrane. The protein localises to the cytoplasm. The catalysed reaction is GTP + H2O = GDP + phosphate + H(+). Functionally, involved in targeting and insertion of nascent membrane proteins into the cytoplasmic membrane. Acts as a receptor for the complex formed by the signal recognition particle (SRP) and the ribosome-nascent chain (RNC). Interaction with SRP-RNC leads to the transfer of the RNC complex to the Sec translocase for insertion into the membrane, the hydrolysis of GTP by both Ffh and FtsY, and the dissociation of the SRP-FtsY complex into the individual components. This is Signal recognition particle receptor FtsY from Neisseria meningitidis serogroup A / serotype 4A (strain DSM 15465 / Z2491).